Reading from the N-terminus, the 161-residue chain is Transcription elongation factor GreA (161 aa).

Positions 46–71 (AEYTAAKEKQSFLHGKLQELENNLAL) form a coiled coil.

It belongs to the GreA/GreB family.

Its function is as follows. Necessary for efficient RNA polymerase transcription elongation past template-encoded arresting sites. The arresting sites in DNA have the property of trapping a certain fraction of elongating RNA polymerases that pass through, resulting in locked ternary complexes. Cleavage of the nascent transcript by cleavage factors such as GreA or GreB allows the resumption of elongation from the new 3'terminus. GreA releases sequences of 2 to 3 nucleotides. This chain is Transcription elongation factor GreA, found in Syntrophus aciditrophicus (strain SB).